The sequence spans 126 residues: Probable 4-amino-4-deoxy-L-arabinose-phosphoundecaprenol flippase subunit ArnF (126 aa).

A helical membrane pass occupies residues 1–21 (MGFLWALFSVGLVSAAQLLLR). Topologically, residues 22 to 47 (SAMVALPPLTDIVAFLQHLLHFQPGT) are periplasmic. The chain crosses the membrane as a helical span at residues 48–68 (VGLFFGLLGYLLSMVCWYFAL). The Cytoplasmic portion of the chain corresponds to 69–76 (HRLPLSKA). A helical membrane pass occupies residues 77–97 (YALLSLSYILVWAAAIWLPGW). Topologically, residues 98–100 (HEP) are periplasmic. Residues 101–121 (FYWQSLLGVTIIVAGVLTIFW) traverse the membrane as a helical segment. Topologically, residues 122–126 (PVKRR) are cytoplasmic.

This sequence belongs to the ArnF family. Heterodimer of ArnE and ArnF.

It localises to the cell inner membrane. It functions in the pathway bacterial outer membrane biogenesis; lipopolysaccharide biosynthesis. Functionally, translocates 4-amino-4-deoxy-L-arabinose-phosphoundecaprenol (alpha-L-Ara4N-phosphoundecaprenol) from the cytoplasmic to the periplasmic side of the inner membrane. In Klebsiella pneumoniae (strain 342), this protein is Probable 4-amino-4-deoxy-L-arabinose-phosphoundecaprenol flippase subunit ArnF.